Reading from the N-terminus, the 634-residue chain is Threonine--tRNA ligase (634 aa).

One can recognise a TGS domain in the interval 1–61 (MINIRFPDGS…NSNCELRLIT (61 aa)). The tract at residues 241 to 532 (DHRKIGKVLD…LIEHYAGNLP (292 aa)) is catalytic. Zn(2+) contacts are provided by C332, H383, and H509.

This sequence belongs to the class-II aminoacyl-tRNA synthetase family. Homodimer. It depends on Zn(2+) as a cofactor.

The protein resides in the cytoplasm. It catalyses the reaction tRNA(Thr) + L-threonine + ATP = L-threonyl-tRNA(Thr) + AMP + diphosphate + H(+). Its function is as follows. Catalyzes the attachment of threonine to tRNA(Thr) in a two-step reaction: L-threonine is first activated by ATP to form Thr-AMP and then transferred to the acceptor end of tRNA(Thr). Also edits incorrectly charged L-seryl-tRNA(Thr). The chain is Threonine--tRNA ligase from Francisella tularensis subsp. tularensis (strain WY96-3418).